We begin with the raw amino-acid sequence, 89 residues long: Small ribosomal subunit protein uS15 (89 aa).

The protein belongs to the universal ribosomal protein uS15 family. Part of the 30S ribosomal subunit. Forms a bridge to the 50S subunit in the 70S ribosome, contacting the 23S rRNA.

Its function is as follows. One of the primary rRNA binding proteins, it binds directly to 16S rRNA where it helps nucleate assembly of the platform of the 30S subunit by binding and bridging several RNA helices of the 16S rRNA. Forms an intersubunit bridge (bridge B4) with the 23S rRNA of the 50S subunit in the ribosome. This is Small ribosomal subunit protein uS15 from Rhizobium johnstonii (strain DSM 114642 / LMG 32736 / 3841) (Rhizobium leguminosarum bv. viciae).